The chain runs to 702 residues: Polyribonucleotide nucleotidyltransferase (702 aa).

Positions 485 and 491 each coordinate Mg(2+). Residues 552 to 612 (PRTEIICIDP…EGVKKAISII (61 aa)) enclose the KH domain. The S1 motif domain occupies 622–690 (GEIYLGKVTK…NQGRINLSRK (69 aa)).

Belongs to the polyribonucleotide nucleotidyltransferase family. Mg(2+) serves as cofactor.

It localises to the cytoplasm. It catalyses the reaction RNA(n+1) + phosphate = RNA(n) + a ribonucleoside 5'-diphosphate. In terms of biological role, involved in mRNA degradation. Catalyzes the phosphorolysis of single-stranded polyribonucleotides processively in the 3'- to 5'-direction. This Clostridium botulinum (strain Kyoto / Type A2) protein is Polyribonucleotide nucleotidyltransferase.